The following is a 370-amino-acid chain: Cysteine-type anaerobic sulfatase-maturating enzyme (370 aa).

The 227-residue stretch at 1–227 (MPPLSLLIKP…LKNLFDLWYE (227 aa)) folds into the Radical SAM core domain. [4Fe-4S] cluster is bound by residues Cys-15 and Cys-19. Tyr-21 is a binding site for S-adenosyl-L-methionine. Cys-22 is a binding site for [4Fe-4S] cluster. Residues Gly-66, Ser-122, Arg-134, and Leu-195 each coordinate S-adenosyl-L-methionine. [4Fe-4S] cluster contacts are provided by Cys-255, Cys-261, and Cys-276. Catalysis depends on Asp-277, which acts as the Proton acceptor. Cys-317, Cys-320, Cys-326, Cys-330, and Cys-348 together coordinate [4Fe-4S] cluster.

The protein belongs to the radical SAM superfamily. Anaerobic sulfatase-maturating enzyme family. [4Fe-4S] cluster serves as cofactor.

The enzyme catalyses L-cysteinyl-[sulfatase] + S-adenosyl-L-methionine + H2O = 3-oxo-L-alanyl-[sulfatase] + hydrogen sulfide + 5'-deoxyadenosine + L-methionine + 2 H(+). Its pathway is protein modification; sulfatase oxidation. Its function is as follows. Involved in 'Cys-type' sulfatase maturation under anaerobic conditions. Catalyzes the post-translational modification of cysteine into 3-oxoalanine (also known as C(alpha)-formylglycine (FGly)), by a free radical chemical mechanism initiated via the reductive cleavage of S-adenosyl-L-methionine (SAM). The chain is Cysteine-type anaerobic sulfatase-maturating enzyme from Clostridium perfringens (strain 13 / Type A).